A 719-amino-acid polypeptide reads, in one-letter code: MNTIDTVVPEMNPALSESIVFAPIRTGEEGEKIPIIPINAALSESIVFSPIPPPPSTTDNTTNTTTTTIETTATDNTNDTEEKQENIENNNNNNNSSISSPNSIDGANKKDSIELEEDKEHSIKRKDGSLGDVVDNEKIIPNSLDSDAPEETSNLNKKSEINIKQVLKNPSFDATNDNHNPQEVDNTDNPDKPTTPRQTTTTTTTTTTTTSTNSTSNKLPNNGDNTVSFDEKFDPNVSHSNLNDDYKASGSSDSPNRVRLNTSQRLKMYKQKSEKRLSHRPKSIKLEHKKNVLGEIIYKGHPSWALMLNIQTGIRNAVGKSMGTEGGVNAKTPQQYHTLRKPSEFKRKEDFYVSPKTQRFESAGTAMTNAHSTGAFKFKDYCPNAFRYLRYLFGIDTADFMVSLCNTLKNGENALRELPTPGKSGSLFFFSHDMKFIIKTIPKDEAKLLRDILPSYLEHIQSNPNSLLPRFFGLYRVKPHSGRQVRFVIMGNLFPTKKKIHERYDLKGSVVGREASVDEKKSDSVTFKDIDFRNRKQKIFLGPGKKQSFIDQIKRDCKLLQSLNIMDYSLLIGIHYPHRENEPPSPSLLRSTLEDSSDFESPSMEQSSAGQQQQQRGSGNYDNSGAGRDSTTGGAAPKENDEIYISAFQQDEGGIKSQGGDTEEHYFLGIIDILMLYSLRKKVEHTYKTLKFGAKQEISSVSPDEYSERFQEFLSTIIE.

The interval 47–261 (VFSPIPPPPS…SDSPNRVRLN (215 aa)) is disordered. Composition is skewed to low complexity over residues 57 to 77 (TTDNTTNTTTTTIETTATDNT) and 87 to 104 (IENNNNNNNSSISSPNSI). Basic and acidic residues predominate over residues 107-129 (ANKKDSIELEEDKEHSIKRKDGS). The segment covering 172 to 184 (FDATNDNHNPQEV) has biased composition (polar residues). Positions 199–217 (TTTTTTTTTTTTSTNSTSN) are enriched in low complexity. 2 stretches are compositionally biased toward polar residues: residues 218-228 (KLPNNGDNTVS) and 248-261 (ASGSSDSPNRVRLN). Position 262 is a phosphothreonine (Thr-262). The region spanning 316–718 (NAVGKSMGTE…RFQEFLSTII (403 aa)) is the PIPK domain. A disordered region spans residues 579–638 (RENEPPSPSLLRSTLEDSSDFESPSMEQSSAGQQQQQRGSGNYDNSGAGRDSTTGGAAPK). Positions 606–619 (QSSAGQQQQQRGSG) are enriched in low complexity.

In terms of processing, phosphorylated at Thr-262 by pkgB.

Its function is as follows. May be involved in signaling events that underlie chemotaxis via the chemoattractant-mediated pkgB phosphorylation. In Dictyostelium discoideum (Social amoeba), this protein is Probable phosphatidylinositol phosphate kinase DDB_G0267588.